Here is a 63-residue protein sequence, read N- to C-terminus: UPF0434 protein Mmar10_2939 (63 aa).

The protein belongs to the UPF0434 family.

This Maricaulis maris (strain MCS10) (Caulobacter maris) protein is UPF0434 protein Mmar10_2939.